Reading from the N-terminus, the 808-residue chain is N-terminal kinase-like protein (808 aa).

A Protein kinase domain is found at 14–314 (FELIPEPPEG…PEDFCRHKVL (301 aa)). 3 HEAT repeats span residues 350–388 (IIPVVVKMFSSTDRAMRIRLLQQMEQFIQYLDEPTVNTQ), 389–427 (IFPHVVHGFLDTNPAIREQTVKSMLLLAPKLNEANLNVE), and 507–545 (ILPVLCGLTVDPEKSVRDQAFKAIRSFLSKLESVSEDPT). Disordered regions lie at residues 540-566 (VSEDPTQLEEVEKDVHAASSPGMGGAA), 587-646 (SHPT…RWDD), and 658-808 (SVLA…RKLD). Low complexity predominate over residues 556–566 (AASSPGMGGAA). Over residues 587–600 (SHPTTAPTETNIPQ) the composition is skewed to polar residues. Pro residues predominate over residues 601-617 (RPTPEGVPAPAPTPVPA). Positions 660-680 (LAQQDDWSTGGQVSRASQVSN) are enriched in polar residues. Positions 681-690 (SDHKSSKSPE) are enriched in basic and acidic residues. At Ser754 the chain carries Phosphoserine. Positions 755–764 (WGEDNWEGLE) are enriched in acidic residues. Residues 761–797 (EGLETDSRQVKAELARKKREERRREMEAKRAERKVAK) are a coiled coil. Composition is skewed to basic and acidic residues over residues 765 to 775 (TDSRQVKAELA) and 782 to 795 (RRREMEAKRAERKV). Residues 793 to 808 (RKVAKGPMKLGARKLD) form an interaction with COPB1 region.

This sequence belongs to the protein kinase superfamily. Interacts with GORAB. Interacts with COPA, COPB1 and COPB2. Homooligomer. Interacts with AP2B1. Ubiquitous.

Its subcellular location is the cytoplasm. It is found in the cytoskeleton. The protein localises to the microtubule organizing center. It localises to the centrosome. The protein resides in the endoplasmic reticulum-Golgi intermediate compartment. Its subcellular location is the golgi apparatus. It is found in the cis-Golgi network. The protein localises to the nucleus. Its function is as follows. Regulates COPI-mediated retrograde protein traffic at the interface between the Golgi apparatus and the endoplasmic reticulum. Involved in the maintenance of the Golgi apparatus morphology. In terms of biological role, acts as a transcriptional activator. It binds to three different types of GC-rich DNA binding sites (box-A, -B and -C) in the beta-polymerase promoter region. It also binds to the TERT promoter region. This Homo sapiens (Human) protein is N-terminal kinase-like protein (SCYL1).